The primary structure comprises 318 residues: Fe(3+) dicitrate transport system permease protein FecD (318 aa).

At 1 to 2 (MK) the chain is on the cytoplasmic side. The helical transmembrane segment at 3 to 23 (IALVIFITLALAGCALLSLHM) threads the bilayer. The Periplasmic portion of the chain corresponds to 24-55 (GVIPVPWRALLTDWQAGHEHYYVLMEYRLPRL). The helical transmembrane segment at 56–76 (LLALFVGAALAVAGVLIQGIV) threads the bilayer. The Cytoplasmic portion of the chain corresponds to 77-105 (RNPLASPDILGVNHAASLASVGALLLMPS). Residues 106 to 126 (LPVMVLPLLAFAGGMAGLILL) form a helical membrane-spanning segment. Residues 127-137 (KMLAKTHQPMK) lie on the Periplasmic side of the membrane. The helical transmembrane segment at 138-158 (LALTGVALSACWASLTDYLML) threads the bilayer. The Cytoplasmic segment spans residues 159 to 179 (SRPQDVNNALLWLTGSLWGRD). A helical membrane pass occupies residues 180–200 (WSFVKIAIPLMILFLPLSLSF). The Periplasmic portion of the chain corresponds to 201–225 (CRDLDLLALGDARATTLGVSVPHTR). The chain crosses the membrane as a helical span at residues 226-246 (FWALLLAVAMTSTGVAACGPI). Over 247–269 (SFIGLVVPHMMRSITGGRHRRLL) the chain is Cytoplasmic. The helical transmembrane segment at 270-290 (PVSALTGALLLVVADLLARII) threads the bilayer. The Periplasmic segment spans residues 291 to 294 (HPPL). The chain crosses the membrane as a helical span at residues 295–315 (ELPVGVLTAIIGAPWFVWLLV). Topologically, residues 316-318 (RMR) are cytoplasmic.

This sequence belongs to the binding-protein-dependent transport system permease family. FecCD subfamily. The complex is composed of two ATP-binding proteins (FecE), two transmembrane proteins (FecC and FecD) and a solute-binding protein (FecB). Interacts with FecB.

Its subcellular location is the cell inner membrane. In terms of biological role, part of the ABC transporter complex FecBCDE involved in citrate-dependent Fe(3+) uptake. Probably responsible for the translocation of the substrate across the membrane. In Escherichia coli (strain K12), this protein is Fe(3+) dicitrate transport system permease protein FecD.